Consider the following 563-residue polypeptide: Protein disulfide isomerase-like 1-4 (563 aa).

The signal sequence occupies residues 1–22; that stretch reads MRSRSLLLVALATLLLHASASA. Positions 40-64 are disordered; it reads NDPDGWLQEGSPDDDDDDDLFHHGQ. The Thioredoxin 1 domain maps to 46–180; sequence LQEGSPDDDD…IVSWVNKKLA (135 aa). N-linked (GlcNAc...) asparagine glycosylation is present at Asn82. Residues Cys102 and Cys105 each act as nucleophile in the active site. Cysteines 102 and 105 form a disulfide. N-linked (GlcNAc...) asparagine glycosylation is found at Asn185 and Asn315. The Thioredoxin 2 domain maps to 394–523; the sequence is FLEEKLTPFY…MYKFIKKHAS (130 aa). Active-site nucleophile residues include Cys444 and Cys447. Cysteines 444 and 447 form a disulfide. Residues 529 to 542 show a composition bias toward basic and acidic residues; it reads KRPDSSATKTEKDQ. Residues 529 to 563 form a disordered region; it reads KRPDSSATKTEKDQSTASTNLRGERSSGTNFKDEL. Over residues 543–563 the composition is skewed to polar residues; that stretch reads STASTNLRGERSSGTNFKDEL. The Prevents secretion from ER motif lies at 560–563; that stretch reads KDEL.

The protein belongs to the protein disulfide isomerase family.

It is found in the endoplasmic reticulum lumen. The catalysed reaction is Catalyzes the rearrangement of -S-S- bonds in proteins.. Its function is as follows. Acts as a protein-folding catalyst that interacts with nascent polypeptides to catalyze the formation, isomerization, and reduction or oxidation of disulfide bonds. May play a role in storage protein biogenesis. This Oryza sativa subsp. japonica (Rice) protein is Protein disulfide isomerase-like 1-4 (PDIL1-4).